We begin with the raw amino-acid sequence, 267 residues long: Probable tetrahydroxynaphthalene reductase MYCGRDRAFT_87994 (267 aa).

Positions 26, 72, 99, and 132 each coordinate NADP(+). The active-site Proton donor is the S149. 4 residues coordinate NADP(+): Y163, K167, I196, and T198. Y163 serves as the catalytic Proton acceptor. K167 functions as the Lowers pKa of active site Tyr in the catalytic mechanism.

Belongs to the short-chain dehydrogenases/reductases (SDR) family. As to quaternary structure, homotetramer.

The catalysed reaction is scytalone + NADP(+) = naphthalene-1,3,6,8-tetrol + NADPH + H(+). It functions in the pathway pigment biosynthesis; melanin biosynthesis. In terms of biological role, probable tetrahydroxynaphthalene reductase; part of the gene cluster 29 that mediates the biosynthesis dihydroxynaphthalene (DHN)-melanin, a bluish-green pigment and a structural component of the conidial wall. Catalyzes the NADPH-dependent reduction of 1,3,6,8-tetrahydroxynaphthalene (T4HN) into (+)-scytalone. In Zymoseptoria tritici (strain CBS 115943 / IPO323) (Speckled leaf blotch fungus), this protein is Probable tetrahydroxynaphthalene reductase MYCGRDRAFT_87994.